The chain runs to 250 residues: 5'-nucleotidase SurE (250 aa).

A divalent metal cation is bound by residues Asp-8, Asp-9, Ser-39, and Asn-95.

It belongs to the SurE nucleotidase family. A divalent metal cation is required as a cofactor.

The protein localises to the cytoplasm. The enzyme catalyses a ribonucleoside 5'-phosphate + H2O = a ribonucleoside + phosphate. Functionally, nucleotidase that shows phosphatase activity on nucleoside 5'-monophosphates. This chain is 5'-nucleotidase SurE, found in Syntrophobacter fumaroxidans (strain DSM 10017 / MPOB).